Reading from the N-terminus, the 154-residue chain is Crossover junction endodeoxyribonuclease RuvC (154 aa).

Active-site residues include Asp-7, Glu-67, and Asp-139. Mg(2+) contacts are provided by Asp-7, Glu-67, and Asp-139.

This sequence belongs to the RuvC family. Homodimer which binds Holliday junction (HJ) DNA. The HJ becomes 2-fold symmetrical on binding to RuvC with unstacked arms; it has a different conformation from HJ DNA in complex with RuvA. In the full resolvosome a probable DNA-RuvA(4)-RuvB(12)-RuvC(2) complex forms which resolves the HJ. The cofactor is Mg(2+).

The protein localises to the cytoplasm. The enzyme catalyses Endonucleolytic cleavage at a junction such as a reciprocal single-stranded crossover between two homologous DNA duplexes (Holliday junction).. Functionally, the RuvA-RuvB-RuvC complex processes Holliday junction (HJ) DNA during genetic recombination and DNA repair. Endonuclease that resolves HJ intermediates. Cleaves cruciform DNA by making single-stranded nicks across the HJ at symmetrical positions within the homologous arms, yielding a 5'-phosphate and a 3'-hydroxyl group; requires a central core of homology in the junction. The consensus cleavage sequence is 5'-(A/T)TT(C/G)-3'. Cleavage occurs on the 3'-side of the TT dinucleotide at the point of strand exchange. HJ branch migration catalyzed by RuvA-RuvB allows RuvC to scan DNA until it finds its consensus sequence, where it cleaves and resolves the cruciform DNA. In Synechococcus sp. (strain CC9902), this protein is Crossover junction endodeoxyribonuclease RuvC.